The chain runs to 465 residues: Mitochondrial-processing peptidase subunit beta (465 aa).

A Zn(2+)-binding site is contributed by histidine 79. The active-site Proton acceptor is the glutamate 82. 2 residues coordinate Zn(2+): histidine 83 and glutamate 159.

The protein belongs to the peptidase M16 family. As to quaternary structure, heterodimer of an alpha subunit and a beta subunit subunits, forming the mitochondrial processing protease (MPP) in which the alpha subunit is involved in substrate recognition and binding and the beta subunit is the catalytic subunit. The cofactor is Zn(2+).

The protein localises to the mitochondrion matrix. The enzyme catalyses Release of N-terminal transit peptides from precursor proteins imported into the mitochondrion, typically with Arg in position P2.. Binding to the alpha subunit is required for catalytic activity. Its function is as follows. Catalytic subunit of the essential mitochondrial processing protease (MPP), which cleaves the mitochondrial sequence off newly imported precursors proteins. Preferentially, cleaves after an arginine at position P2. The protein is Mitochondrial-processing peptidase subunit beta (MPP1) of Blastocladiella emersonii (Aquatic fungus).